We begin with the raw amino-acid sequence, 598 residues long: Aspartate--tRNA(Asp/Asn) ligase (598 aa).

Glu-177 provides a ligand contact to L-aspartate. The segment at 201-204 (QLFK) is aspartate. Arg-223 serves as a coordination point for L-aspartate. ATP is bound by residues 223-225 (RDE) and Gln-232. An L-aspartate-binding site is contributed by His-456. Position 493 (Glu-493) interacts with ATP. Arg-500 contacts L-aspartate. 545-548 (GLDR) is a binding site for ATP.

It belongs to the class-II aminoacyl-tRNA synthetase family. Type 1 subfamily. Homodimer.

It is found in the cytoplasm. The enzyme catalyses tRNA(Asx) + L-aspartate + ATP = L-aspartyl-tRNA(Asx) + AMP + diphosphate. Functionally, aspartyl-tRNA synthetase with relaxed tRNA specificity since it is able to aspartylate not only its cognate tRNA(Asp) but also tRNA(Asn). Reaction proceeds in two steps: L-aspartate is first activated by ATP to form Asp-AMP and then transferred to the acceptor end of tRNA(Asp/Asn). This is Aspartate--tRNA(Asp/Asn) ligase from Prochlorococcus marinus (strain MIT 9301).